The following is a 95-amino-acid chain: Aspartyl/glutamyl-tRNA(Asn/Gln) amidotransferase subunit C (95 aa).

This sequence belongs to the GatC family. Heterotrimer of A, B and C subunits.

It carries out the reaction L-glutamyl-tRNA(Gln) + L-glutamine + ATP + H2O = L-glutaminyl-tRNA(Gln) + L-glutamate + ADP + phosphate + H(+). It catalyses the reaction L-aspartyl-tRNA(Asn) + L-glutamine + ATP + H2O = L-asparaginyl-tRNA(Asn) + L-glutamate + ADP + phosphate + 2 H(+). In terms of biological role, allows the formation of correctly charged Asn-tRNA(Asn) or Gln-tRNA(Gln) through the transamidation of misacylated Asp-tRNA(Asn) or Glu-tRNA(Gln) in organisms which lack either or both of asparaginyl-tRNA or glutaminyl-tRNA synthetases. The reaction takes place in the presence of glutamine and ATP through an activated phospho-Asp-tRNA(Asn) or phospho-Glu-tRNA(Gln). The chain is Aspartyl/glutamyl-tRNA(Asn/Gln) amidotransferase subunit C from Chlorobaculum parvum (strain DSM 263 / NCIMB 8327) (Chlorobium vibrioforme subsp. thiosulfatophilum).